Reading from the N-terminus, the 51-residue chain is Large ribosomal subunit protein bL33 (51 aa).

The protein belongs to the bacterial ribosomal protein bL33 family.

The protein is Large ribosomal subunit protein bL33 of Acinetobacter baylyi (strain ATCC 33305 / BD413 / ADP1).